The chain runs to 382 residues: ATP phosphoribosyltransferase regulatory subunit (382 aa).

This sequence belongs to the class-II aminoacyl-tRNA synthetase family. HisZ subfamily. Heteromultimer composed of HisG and HisZ subunits.

It localises to the cytoplasm. It participates in amino-acid biosynthesis; L-histidine biosynthesis; L-histidine from 5-phospho-alpha-D-ribose 1-diphosphate: step 1/9. Functionally, required for the first step of histidine biosynthesis. May allow the feedback regulation of ATP phosphoribosyltransferase activity by histidine. In Burkholderia cenocepacia (strain HI2424), this protein is ATP phosphoribosyltransferase regulatory subunit.